We begin with the raw amino-acid sequence, 619 residues long: MAVVKVEFAISGKLVNKPRVDDWNPLAKFYYADEALNAVANELDSFDGRRDPERCSQLVNKLRQAQDRLLHIISEMIQQVFPRESDRACRDYRVKFPEEIMHDNLPGQLWFGAEANVIPVFGCTFSCLTAGSNIIDHEVESEAIRPMARALTKHLDTLRDLLKDQSLRDPTHYSDKVKRSLKHFDHLFAEFELNYVSAMVPVKSVREYDCQLDIAVLFSEALDRAVRLDYLTQDQIDDCDPIVMIAVPRLAIVCGLLYFPEGALNVDANPETLSNMFRSFHSLLVKIRDLLRILNLHELRRVEKALCTGETQVKFGEDSIVETLTVANFHLKTTGKGTGRILEAQNLQPNGSSSSNSSDGGDCDVSSASGSVCHTNTFAYKILSPIRLKDSSESSSIENSSKLDLLIMTHPPDPHRLRARFRSSADLIHRLFVCICGVADQLQTNYPTDLRRVLKMILQPNDVVPISGKTAPNPENEEEMGLEVQEALPLPSLIGVRWVPDSDCEQCTACSAQFTLVRRRHHCRNCGRIFCSRCSANSLPLPELGYDRKVRVCNLCFLYKINPFSPCTGQSNSSQNHSVIAFNSAVTSTAVVLNQVDHERSQDGSQSNESPTATTATTI.

The segment at Asp-501 to Ile-561 adopts an FYVE-type zinc-finger fold. Residues Cys-507, Cys-510, Cys-523, Cys-526, Cys-531, Cys-534, Cys-553, and Cys-556 each coordinate Zn(2+). The disordered stretch occupies residues His-598–Ile-619. Residues Asp-603–Ile-619 show a composition bias toward polar residues.

Belongs to the lst-2 family.

Functionally, negative regulator of epidermal growth factor receptor (EGFR) signaling. The chain is Lateral signaling target protein 2 homolog from Brugia malayi (Filarial nematode worm).